We begin with the raw amino-acid sequence, 204 residues long: Recombination protein RecR (204 aa).

A C4-type zinc finger spans residues 58–75; the sequence is CSICQNITDLGTDPCLLC. Residues 83-181 form the Toprim domain; the sequence is SVICVVESPT…NVTRIARGIP (99 aa).

Belongs to the RecR family.

In terms of biological role, may play a role in DNA repair. It seems to be involved in an RecBC-independent recombinational process of DNA repair. It may act with RecF and RecO. This Chlorobaculum parvum (strain DSM 263 / NCIMB 8327) (Chlorobium vibrioforme subsp. thiosulfatophilum) protein is Recombination protein RecR.